Here is an 85-residue protein sequence, read N- to C-terminus: Mitochondrial import inner membrane translocase subunit TIM9 (85 aa).

The short motif at 35–59 (CFTDCVNDFTSKALSSREESCLEKC) is the Twin CX3C motif element. Intrachain disulfides connect cysteine 35-cysteine 59 and cysteine 39-cysteine 55.

Belongs to the small Tim family. As to quaternary structure, heterohexamer; composed of 3 copies of TIM9 and 3 copies of TIM10, named soluble 70 kDa complex. Associates with the TIM22 complex, whose core is composed of TIM22 and TIM54. Interacts with the transmembrane regions of multi-pass transmembrane proteins in transit.

It is found in the mitochondrion inner membrane. Mitochondrial intermembrane chaperone that participates in the import and insertion of multi-pass transmembrane proteins into the mitochondrial inner membrane. Also required for the transfer of beta-barrel precursors from the TOM complex to the sorting and assembly machinery (SAM complex) of the outer membrane. Acts as a chaperone-like protein that protects the hydrophobic precursors from aggregation and guide them through the mitochondrial intermembrane space. The protein is Mitochondrial import inner membrane translocase subunit TIM9 (TIM9) of Yarrowia lipolytica (strain CLIB 122 / E 150) (Yeast).